Here is a 368-residue protein sequence, read N- to C-terminus: Glutaminyl-peptide cyclotransferase (368 aa).

The N-terminal stretch at 1–23 is a signal peptide; that stretch reads MAGERRDSKAAAFFCLAWALCLA. The N-linked (GlcNAc...) asparagine glycan is linked to Asn53. Residues Cys143 and Cys169 are joined by a disulfide bond. Asp164 provides a ligand contact to Zn(2+). The active-site Proton acceptor is the Glu207. Glu208 contacts Zn(2+). The active-site Proton acceptor is Asp254. A glycan (N-linked (GlcNAc...) asparagine) is linked at Asn292. His336 lines the Zn(2+) pocket. A glycan (N-linked (GlcNAc...) asparagine) is linked at Asn352.

The protein belongs to the glutaminyl-peptide cyclotransferase family. Expressed by the venom gland.

It localises to the secreted. It catalyses the reaction N-terminal L-glutaminyl-[peptide] = N-terminal 5-oxo-L-prolyl-[peptide] + NH4(+). Functionally, responsible for the biosynthesis of pyroglutamyl peptides. Has a bias against acidic and tryptophan residues adjacent to the N-terminal glutaminyl residue and a lack of importance of chain length after the second residue. Also catalyzes N-terminal pyroglutamate formation. The polypeptide is Glutaminyl-peptide cyclotransferase (QPCT) (Boiga irregularis (Brown tree snake)).